The following is a 344-amino-acid chain: Mycothiol acetyltransferase (344 aa).

Position 36 (Glu36) interacts with 1D-myo-inositol 2-(L-cysteinylamino)-2-deoxy-alpha-D-glucopyranoside. 2 N-acetyltransferase domains span residues 40–179 and 187–344; these read LALR…TPLP and VTVR…PSTG. Residues 61–83 form a disordered region; it reads ADTSGPNVPDTPGDQNAADTSTM. Polar residues predominate over residues 73–83; sequence GDQNAADTSTM. Residue 109–111 coordinates acetyl-CoA; the sequence is VVV. Residues Glu214, Lys253, and Glu272 each contribute to the 1D-myo-inositol 2-(L-cysteinylamino)-2-deoxy-alpha-D-glucopyranoside site. Acetyl-CoA-binding positions include 276–278 and 283–289; these read VGV and GGAGLGR. Tyr310 lines the 1D-myo-inositol 2-(L-cysteinylamino)-2-deoxy-alpha-D-glucopyranoside pocket. 315-320 serves as a coordination point for acetyl-CoA; it reads NVRAVR.

This sequence belongs to the acetyltransferase family. MshD subfamily. Monomer.

It catalyses the reaction 1D-myo-inositol 2-(L-cysteinylamino)-2-deoxy-alpha-D-glucopyranoside + acetyl-CoA = mycothiol + CoA + H(+). Functionally, catalyzes the transfer of acetyl from acetyl-CoA to desacetylmycothiol (Cys-GlcN-Ins) to form mycothiol. This is Mycothiol acetyltransferase from Frankia casuarinae (strain DSM 45818 / CECT 9043 / HFP020203 / CcI3).